Reading from the N-terminus, the 292-residue chain is GTP cyclohydrolase FolE2 (292 aa).

This sequence belongs to the GTP cyclohydrolase IV family.

The enzyme catalyses GTP + H2O = 7,8-dihydroneopterin 3'-triphosphate + formate + H(+). Its pathway is cofactor biosynthesis; 7,8-dihydroneopterin triphosphate biosynthesis; 7,8-dihydroneopterin triphosphate from GTP: step 1/1. Converts GTP to 7,8-dihydroneopterin triphosphate. In Staphylococcus aureus (strain MRSA252), this protein is GTP cyclohydrolase FolE2.